A 460-amino-acid polypeptide reads, in one-letter code: Argininosuccinate lyase (460 aa).

This sequence belongs to the lyase 1 family. Argininosuccinate lyase subfamily.

It is found in the cytoplasm. It catalyses the reaction 2-(N(omega)-L-arginino)succinate = fumarate + L-arginine. It functions in the pathway amino-acid biosynthesis; L-arginine biosynthesis; L-arginine from L-ornithine and carbamoyl phosphate: step 3/3. This is Argininosuccinate lyase from Solibacter usitatus (strain Ellin6076).